The primary structure comprises 610 residues: UvrABC system protein C (610 aa).

One can recognise a GIY-YIG domain in the interval 16-94 (SQPGVYRMYD…IQRYQPRYNV (79 aa)). Residues 204–239 (SQVIEGLIKRMEEASQALRFEEAARIRDQIHAVRQV) form the UVR domain.

It belongs to the UvrC family. In terms of assembly, interacts with UvrB in an incision complex.

The protein resides in the cytoplasm. Its function is as follows. The UvrABC repair system catalyzes the recognition and processing of DNA lesions. UvrC both incises the 5' and 3' sides of the lesion. The N-terminal half is responsible for the 3' incision and the C-terminal half is responsible for the 5' incision. The polypeptide is UvrABC system protein C (Proteus mirabilis (strain HI4320)).